A 176-amino-acid polypeptide reads, in one-letter code: Urease accessory protein UreE (176 aa).

Residues 147 to 176 are disordered; that stretch reads AGAYQQGGGHSHGHAHSHSHEKPHSHTHNH.

Belongs to the UreE family.

The protein resides in the cytoplasm. Involved in urease metallocenter assembly. Binds nickel. Probably functions as a nickel donor during metallocenter assembly. In Alcanivorax borkumensis (strain ATCC 700651 / DSM 11573 / NCIMB 13689 / SK2), this protein is Urease accessory protein UreE.